A 205-amino-acid polypeptide reads, in one-letter code: Thymidylate kinase (205 aa).

11-18 (GVEGAGKS) is a binding site for ATP.

Belongs to the thymidylate kinase family.

It carries out the reaction dTMP + ATP = dTDP + ADP. In terms of biological role, phosphorylation of dTMP to form dTDP in both de novo and salvage pathways of dTTP synthesis. The protein is Thymidylate kinase of Vesicomyosocius okutanii subsp. Calyptogena okutanii (strain HA).